Reading from the N-terminus, the 614-residue chain is Elongation factor 4 (614 aa).

Residues 10 to 192 enclose the tr-type G domain; sequence ALIRNFCIIA…EIVARIPPPV (183 aa). GTP is bound by residues 22-27 and 139-142; these read DHGKST and NKID.

It belongs to the TRAFAC class translation factor GTPase superfamily. Classic translation factor GTPase family. LepA subfamily.

It localises to the cell membrane. The catalysed reaction is GTP + H2O = GDP + phosphate + H(+). Its function is as follows. Required for accurate and efficient protein synthesis under certain stress conditions. May act as a fidelity factor of the translation reaction, by catalyzing a one-codon backward translocation of tRNAs on improperly translocated ribosomes. Back-translocation proceeds from a post-translocation (POST) complex to a pre-translocation (PRE) complex, thus giving elongation factor G a second chance to translocate the tRNAs correctly. Binds to ribosomes in a GTP-dependent manner. This chain is Elongation factor 4, found in Thermobifida fusca (strain YX).